The chain runs to 116 residues: Large ribosomal subunit protein bL19 (116 aa).

The protein belongs to the bacterial ribosomal protein bL19 family.

This protein is located at the 30S-50S ribosomal subunit interface and may play a role in the structure and function of the aminoacyl-tRNA binding site. The chain is Large ribosomal subunit protein bL19 from Lactobacillus gasseri (strain ATCC 33323 / DSM 20243 / BCRC 14619 / CIP 102991 / JCM 1131 / KCTC 3163 / NCIMB 11718 / NCTC 13722 / AM63).